We begin with the raw amino-acid sequence, 56 residues long: Large ribosomal subunit protein bL33 (56 aa).

Belongs to the bacterial ribosomal protein bL33 family.

This is Large ribosomal subunit protein bL33 from Rickettsia bellii (strain OSU 85-389).